A 244-amino-acid chain; its full sequence is DNA repair protein RecO (244 aa).

The protein belongs to the RecO family.

In terms of biological role, involved in DNA repair and RecF pathway recombination. The polypeptide is DNA repair protein RecO (Geobacter metallireducens (strain ATCC 53774 / DSM 7210 / GS-15)).